A 338-amino-acid chain; its full sequence is Putative transposase for insertion sequence element IS4SA (338 aa).

The protein belongs to the transposase 11 family.

This is Putative transposase for insertion sequence element IS4SA from Synechocystis sp. (strain ATCC 27184 / PCC 6803 / Kazusa).